The following is a 267-amino-acid chain: Inositol-1-monophosphatase (267 aa).

Residues Glu66, Asp84, Leu86, and Asp87 each coordinate Mg(2+). Substrate is bound at residue Glu66. Residues 86 to 89 (LDGS), Arg182, and Asp213 contribute to the substrate site. Asp213 is a binding site for Mg(2+).

It belongs to the inositol monophosphatase superfamily. Mg(2+) is required as a cofactor.

It catalyses the reaction a myo-inositol phosphate + H2O = myo-inositol + phosphate. This chain is Inositol-1-monophosphatase (suhB), found in Aeropyrum pernix (strain ATCC 700893 / DSM 11879 / JCM 9820 / NBRC 100138 / K1).